The sequence spans 191 residues: dCTP deaminase (191 aa).

Residues 112-117 (KSTYAR), 136-138 (TLE), Q157, Y173, and Q183 contribute to the dCTP site. The active-site Proton donor/acceptor is E138.

The protein belongs to the dCTP deaminase family. Homotrimer.

The enzyme catalyses dCTP + H2O + H(+) = dUTP + NH4(+). It functions in the pathway pyrimidine metabolism; dUMP biosynthesis; dUMP from dCTP (dUTP route): step 1/2. Catalyzes the deamination of dCTP to dUTP. The sequence is that of dCTP deaminase from Xylella fastidiosa (strain M12).